Consider the following 161-residue polypeptide: Nucleotide-binding protein Gbem_0619 (161 aa).

The protein belongs to the YajQ family.

In terms of biological role, nucleotide-binding protein. This chain is Nucleotide-binding protein Gbem_0619, found in Citrifermentans bemidjiense (strain ATCC BAA-1014 / DSM 16622 / JCM 12645 / Bem) (Geobacter bemidjiensis).